The primary structure comprises 743 residues: Threonine synthase-like 1 (743 aa).

K281 carries the N6-acetyllysine modification. Position 351 is an N6-(pyridoxal phosphate)lysine (K351).

Belongs to the threonine synthase family. Pyridoxal 5'-phosphate is required as a cofactor.

The polypeptide is Threonine synthase-like 1 (THNSL1) (Homo sapiens (Human)).